The chain runs to 248 residues: NAD-dependent protein deacylase 2 (248 aa).

A Deacetylase sirtuin-type domain is found at Met-1–Ile-248. Residues Gly-19–Tyr-38 and Gln-102–Asp-105 contribute to the NAD(+) site. The Proton acceptor role is filled by His-122. Zn(2+) contacts are provided by Cys-130, Cys-133, Cys-152, and Cys-155. Residues Gly-193 to Thr-195, Asn-219 to Gln-221, and Ala-237 contribute to the NAD(+) site.

This sequence belongs to the sirtuin family. Class III subfamily. Zn(2+) is required as a cofactor.

It is found in the cytoplasm. The enzyme catalyses N(6)-acetyl-L-lysyl-[protein] + NAD(+) + H2O = 2''-O-acetyl-ADP-D-ribose + nicotinamide + L-lysyl-[protein]. Functionally, NAD-dependent protein deacetylase which modulates the activities of several proteins which are inactive in their acetylated form. The protein is NAD-dependent protein deacylase 2 (cobB2) of Pseudomonas syringae pv. tomato (strain ATCC BAA-871 / DC3000).